The primary structure comprises 364 residues: MKKKYRIAVLPGDGIGPEVMQEAYKILNILKDHFLLPLEMKEFNIGGIAIDQEGIALPKNTLLGCENSDAILFGSVGGKKWDYLSIDKRPERAALLPLRKHFNLFSNLRPAKLYADLKYLSPLRSNIIKDGFDILCVRELTGGIYFGKPNGHSKKNDIEYAFDTEVYYDYEISRIAHLAFQLARNRKKKVCSLDKSNVLKSSILWKEIVEKISKNYPDVHLSHLYIDNAIMQIIKDPSQFDVILCSNLFGDIVSDECAAITGSIGMLPSASLNEKNFGLYEPAGGSAPDIAGKNIANPIAQILSVSMLVRHGMNLKKIADKIDESVVSVLKQGYRTADISNNSHNYLKTSEMGDIIANFLINGK.

NAD(+) is bound at residue glycine 78–glutamate 91. Substrate contacts are provided by arginine 99, arginine 109, arginine 138, and aspartate 227. Mg(2+) is bound by residues aspartate 227, aspartate 251, and aspartate 255. An NAD(+)-binding site is contributed by glycine 285 to asparagine 297.

It belongs to the isocitrate and isopropylmalate dehydrogenases family. LeuB type 1 subfamily. In terms of assembly, homodimer. The cofactor is Mg(2+). Requires Mn(2+) as cofactor.

It is found in the cytoplasm. The enzyme catalyses (2R,3S)-3-isopropylmalate + NAD(+) = 4-methyl-2-oxopentanoate + CO2 + NADH. It participates in amino-acid biosynthesis; L-leucine biosynthesis; L-leucine from 3-methyl-2-oxobutanoate: step 3/4. In terms of biological role, catalyzes the oxidation of 3-carboxy-2-hydroxy-4-methylpentanoate (3-isopropylmalate) to 3-carboxy-4-methyl-2-oxopentanoate. The product decarboxylates to 4-methyl-2 oxopentanoate. The sequence is that of 3-isopropylmalate dehydrogenase from Buchnera aphidicola subsp. Uroleucon erigeronensis.